The following is a 460-amino-acid chain: ATP synthase subunit beta (460 aa).

Residue 149–156 (GGAGVGKT) participates in ATP binding.

Belongs to the ATPase alpha/beta chains family. As to quaternary structure, F-type ATPases have 2 components, CF(1) - the catalytic core - and CF(0) - the membrane proton channel. CF(1) has five subunits: alpha(3), beta(3), gamma(1), delta(1), epsilon(1). CF(0) has three main subunits: a(1), b(2) and c(9-12). The alpha and beta chains form an alternating ring which encloses part of the gamma chain. CF(1) is attached to CF(0) by a central stalk formed by the gamma and epsilon chains, while a peripheral stalk is formed by the delta and b chains.

Its subcellular location is the cell membrane. The catalysed reaction is ATP + H2O + 4 H(+)(in) = ADP + phosphate + 5 H(+)(out). In terms of biological role, produces ATP from ADP in the presence of a proton gradient across the membrane. The catalytic sites are hosted primarily by the beta subunits. The protein is ATP synthase subunit beta of Acholeplasma laidlawii (strain PG-8A).